We begin with the raw amino-acid sequence, 446 residues long: Glutamate-1-semialdehyde 2,1-aminomutase (446 aa).

Lysine 278 is subject to N6-(pyridoxal phosphate)lysine.

The protein belongs to the class-III pyridoxal-phosphate-dependent aminotransferase family. HemL subfamily. In terms of assembly, homodimer. Pyridoxal 5'-phosphate serves as cofactor.

The protein localises to the cytoplasm. It catalyses the reaction (S)-4-amino-5-oxopentanoate = 5-aminolevulinate. It participates in porphyrin-containing compound metabolism; protoporphyrin-IX biosynthesis; 5-aminolevulinate from L-glutamyl-tRNA(Glu): step 2/2. This is Glutamate-1-semialdehyde 2,1-aminomutase from Deinococcus geothermalis (strain DSM 11300 / CIP 105573 / AG-3a).